Here is a 453-residue protein sequence, read N- to C-terminus: Mitochondrial import inner membrane translocase subunit TIM44 (453 aa).

A Phosphothreonine modification is found at T129. G167–T174 serves as a coordination point for ATP. At K178 the chain carries N6-succinyllysine. S181 is modified (phosphoserine). K218 is modified (N6-succinyllysine).

The protein belongs to the Tim44 family. As to quaternary structure, probable component of the PAM complex at least composed of a mitochondrial HSP70 protein, GRPEL1 or GRPEL2, TIMM44, TIMM16/PAM16 and TIMM14/DNAJC19. The complex interacts with the TIMM23 component of the TIM23 complex. Interacts with SLC25A4/ANT1 and SLC25A5/ANT2; leading to inhibit the presequence translocase TIMM23, thereby promoting stabilization of PINK1.

Its subcellular location is the mitochondrion inner membrane. The protein localises to the mitochondrion matrix. In terms of biological role, essential component of the PAM complex, a complex required for the translocation of transit peptide-containing proteins from the inner membrane into the mitochondrial matrix in an ATP-dependent manner. Recruits mitochondrial HSP70 to drive protein translocation into the matrix using ATP as an energy source. In Rattus norvegicus (Rat), this protein is Mitochondrial import inner membrane translocase subunit TIM44 (Timm44).